Reading from the N-terminus, the 716-residue chain is Radial spoke head protein 4 homolog A (716 aa).

Disordered stretches follow at residues 1-164 (MEDS…CGRR), 375-410 (EGED…PKSF), 506-526 (GEEE…FEEN), and 697-716 (LLAA…DDYD). Residues 8-25 (KQEKENQEELGETRRPWE) are compositionally biased toward basic and acidic residues. Composition is skewed to low complexity over residues 29–42 (AASP…SSEP), 54–66 (QSRS…PQSR), and 80–100 (SSPA…LAPA). The segment covering 140-156 (HHTSQSEGNTFQQSQQP) has biased composition (polar residues). Over residues 375-389 (EGEDEEEVEEEDVAE) the composition is skewed to acidic residues. Ser-396 bears the Phosphoserine mark. Acidic residues-rich tracts occupy residues 506-516 (GEEEGEEEEEA) and 701-716 (ENEE…DDYD).

Belongs to the flagellar radial spoke RSP4/6 family. As to quaternary structure, interacts with RSPH6A. As to expression, expressed in trachea, lungs, and testes. Very strong expression is detected in nasal brushings.

It is found in the cytoplasm. It localises to the cytoskeleton. Its subcellular location is the cilium axoneme. The protein resides in the cell projection. The protein localises to the cilium. In terms of biological role, component of the axonemal radial spoke head which plays an important role in ciliary motility. Essential for triplet radial spokes (RS1, RS2 and RS3) head assembly in the motile cilia. The chain is Radial spoke head protein 4 homolog A (RSPH4A) from Homo sapiens (Human).